The chain runs to 134 residues: Prefoldin subunit alpha (134 aa).

Belongs to the prefoldin subunit alpha family. In terms of assembly, heterohexamer of two alpha and four beta subunits.

It is found in the cytoplasm. Functionally, molecular chaperone capable of stabilizing a range of proteins. Seems to fulfill an ATP-independent, HSP70-like function in archaeal de novo protein folding. This is Prefoldin subunit alpha from Pyrobaculum calidifontis (strain DSM 21063 / JCM 11548 / VA1).